A 684-amino-acid chain; its full sequence is Protein EXECUTER 1, chloroplastic (684 aa).

A compositionally biased stretch (polar residues) spans 1–31; it reads MPSLSTPPSQNLAFSPAASATSSRLTPSSKR. Residues 1 to 46 constitute a chloroplast transit peptide; sequence MPSLSTPPSQNLAFSPAASATSSRLTPSSKRSFYPHRLPDPTALCR. The tract at residues 1–66 is disordered; the sequence is MPSLSTPPSQ…SSSSSDDNPR (66 aa). The segment covering 48 to 61 has biased composition (low complexity); that stretch reads SSSSGSNSSSSSSS. Positions 127–162 constitute a UVR domain; sequence DRLLSVLKSQLNRAIKREDYEDAARLKVAIAATATN. The interval 278–318 is disordered; it reads TLTPGRFLTSPGRKEDTGNLAVESSEDEESDNSDDDSDLLE. The span at 301-318 shows a compositional bias: acidic residues; sequence SSEDEESDNSDDDSDLLE.

The protein resides in the plastid. It is found in the chloroplast. In terms of biological role, together with EX2, enables higher plants to perceive singlet oxygen as a stress signal in plastid that activates a genetically determined nuclear stress response program which triggers a programmed cell death (PCD). This transfer of singlet oxygen-induced stress-related signals from the plastid to the nucleus that triggers genetically controlled PCD pathway is unique to photosynthetic eukaryotes and operates under mild stress conditions, impeding photosystem II (PSII) without causing photooxidative damage of the plant. This chain is Protein EXECUTER 1, chloroplastic, found in Arabidopsis thaliana (Mouse-ear cress).